Reading from the N-terminus, the 949-residue chain is Serine/threonine-protein kinase KIPK2 (949 aa).

Disordered regions lie at residues 79–116, 323–344, 407–426, and 495–525; these read LETS…VGPS, TALS…TEKS, STST…DKNV, and SSEK…SNLS. Over residues 81–94 the composition is skewed to low complexity; that stretch reads TSASAGTSRSTSPS. Composition is skewed to polar residues over residues 407–420 and 495–512; these read STST…NTSH and SSEK…LGDY. Over residues 513-525 the composition is skewed to low complexity; that stretch reads SSSTSMSEESNLS. A Protein kinase domain is found at 559–898; the sequence is FNLLKKLGCG…AAEIKRHPFF (340 aa). ATP contacts are provided by residues 565–573 and K588; that span reads LGCGDIGTV. D684 acts as the Proton acceptor in catalysis.

It belongs to the protein kinase superfamily. Ser/Thr protein kinase family. As to quaternary structure, interacts with KCBP, PERK8, PERK9, PERK10 and PERK13.

The enzyme catalyses L-seryl-[protein] + ATP = O-phospho-L-seryl-[protein] + ADP + H(+). It catalyses the reaction L-threonyl-[protein] + ATP = O-phospho-L-threonyl-[protein] + ADP + H(+). In terms of biological role, serine/threonine-protein kinase that could be involved in the negative regulation of root growth. This is Serine/threonine-protein kinase KIPK2 from Arabidopsis thaliana (Mouse-ear cress).